Here is a 1424-residue protein sequence, read N- to C-terminus: ABC multidrug transporter H (1424 aa).

The tract at residues 1–49 (MEDQGHLPSEPRALFDRRDDTDSTNTALDETDLSRTPLQDTSHTPHAED) is disordered. Polar residues predominate over residues 23–42 (STNTALDETDLSRTPLQDTS). N-linked (GlcNAc...) asparagine glycans are attached at residues asparagine 79 and asparagine 275. An ABC transporter 1 domain is found at 96–351 (LSQFNIPQHI…MEEQGFVCRE (256 aa)). 7 helical membrane-spanning segments follow: residues 488–508 (GLFI…LLAM), 520–540 (VLIK…IAQI), 544–564 (IPVL…MVGL), 569–589 (GAFF…TALF), 605–625 (VSGF…PYHA), 629–649 (WFIW…LLSI), and 710–730 (NFGI…IATS). The interval 760-782 (EEAQLNEKAGHKGTGTDSEAQSN) is disordered. 2 N-linked (GlcNAc...) asparagine glycosylation sites follow: asparagine 790 and asparagine 798. Residues 794–1037 (FTWKNLTYTV…VKDYFARYGA (244 aa)) form the ABC transporter 2 domain. Residue 830–837 (GSSGAGKT) participates in ATP binding. The next 4 membrane-spanning stretches (helical) occupy residues 1131-1151 (IALH…IGDS), 1161-1181 (TIFN…PLFI), 1200-1220 (VAFV…CAVL), and 1240-1260 (AIFF…QFIA). The N-linked (GlcNAc...) asparagine glycan is linked to asparagine 1265. 2 helical membrane-spanning segments follow: residues 1268-1288 (FAAL…GVLV) and 1300-1320 (WIYW…FSVF). Asparagine 1338 is a glycosylation site (N-linked (GlcNAc...) asparagine). Residues 1395 to 1415 (TAIVCIFVLSSYALVYALMKL) form a helical membrane-spanning segment.

Belongs to the ABC transporter superfamily. ABCG family. PDR (TC 3.A.1.205) subfamily.

Its subcellular location is the cell membrane. The efflux inhibitor FK506 impairs the transport activity. ABC efflux transporter that is able to transport rhodamine 6G (R-6G), a known substrate for many ABC transporters, but seems not to transport azoles. This Aspergillus fumigatus (strain ATCC MYA-4609 / CBS 101355 / FGSC A1100 / Af293) (Neosartorya fumigata) protein is ABC multidrug transporter H.